Reading from the N-terminus, the 281-residue chain is Undecaprenyl-diphosphatase (281 aa).

7 consecutive transmembrane segments (helical) span residues 45 to 65 (AFTN…VVVI), 86 to 106 (WQLW…GLIF), 114 to 134 (FQNF…FIYV), 148 to 168 (LVSL…LSLI), 196 to 216 (FFLG…KFIV), 224 to 244 (SQLF…LYVI), and 256 to 276 (FTFF…YGLM).

It belongs to the UppP family.

It is found in the cell membrane. The enzyme catalyses di-trans,octa-cis-undecaprenyl diphosphate + H2O = di-trans,octa-cis-undecaprenyl phosphate + phosphate + H(+). Catalyzes the dephosphorylation of undecaprenyl diphosphate (UPP). Confers resistance to bacitracin. The sequence is that of Undecaprenyl-diphosphatase from Streptococcus mutans serotype c (strain ATCC 700610 / UA159).